Reading from the N-terminus, the 436-residue chain is D-aminoacyl-tRNA deacylase (436 aa).

This sequence belongs to the DtdA deacylase family. Monomer. It depends on Zn(2+) as a cofactor.

The enzyme catalyses a D-aminoacyl-tRNA + H2O = a tRNA + a D-alpha-amino acid + H(+). The catalysed reaction is glycyl-tRNA(Ala) + H2O = tRNA(Ala) + glycine + H(+). Functionally, D-aminoacyl-tRNA deacylase with broad substrate specificity. By recycling D-aminoacyl-tRNA to D-amino acids and free tRNA molecules, this enzyme counteracts the toxicity associated with the formation of D-aminoacyl-tRNA entities in vivo. The polypeptide is D-aminoacyl-tRNA deacylase (Methanoregula boonei (strain DSM 21154 / JCM 14090 / 6A8)).